Consider the following 97-residue polypeptide: Small ribosomal subunit protein bS6 (97 aa).

The protein belongs to the bacterial ribosomal protein bS6 family.

In terms of biological role, binds together with bS18 to 16S ribosomal RNA. In Lactococcus lactis subsp. lactis (strain IL1403) (Streptococcus lactis), this protein is Small ribosomal subunit protein bS6 (rpsF).